The following is a 347-amino-acid chain: N-acetyl-gamma-glutamyl-phosphate reductase (347 aa).

The active site involves Cys152.

The protein belongs to the NAGSA dehydrogenase family. Type 1 subfamily.

It localises to the cytoplasm. It carries out the reaction N-acetyl-L-glutamate 5-semialdehyde + phosphate + NADP(+) = N-acetyl-L-glutamyl 5-phosphate + NADPH + H(+). It participates in amino-acid biosynthesis; L-arginine biosynthesis; N(2)-acetyl-L-ornithine from L-glutamate: step 3/4. Its function is as follows. Catalyzes the NADPH-dependent reduction of N-acetyl-5-glutamyl phosphate to yield N-acetyl-L-glutamate 5-semialdehyde. In Ehrlichia ruminantium (strain Gardel), this protein is N-acetyl-gamma-glutamyl-phosphate reductase.